The sequence spans 312 residues: Ribonuclease Z (312 aa).

Residues His63, His65, Asp67, His68, His141, Asp212, and His270 each coordinate Zn(2+). Asp67 serves as the catalytic Proton acceptor.

The protein belongs to the RNase Z family. As to quaternary structure, homodimer. The cofactor is Zn(2+).

It carries out the reaction Endonucleolytic cleavage of RNA, removing extra 3' nucleotides from tRNA precursor, generating 3' termini of tRNAs. A 3'-hydroxy group is left at the tRNA terminus and a 5'-phosphoryl group is left at the trailer molecule.. In terms of biological role, zinc phosphodiesterase, which displays some tRNA 3'-processing endonuclease activity. Probably involved in tRNA maturation, by removing a 3'-trailer from precursor tRNA. This Lactobacillus helveticus (strain DPC 4571) protein is Ribonuclease Z.